Consider the following 751-residue polypeptide: MADKCPFHNQAPKPNVAGSGTQNRDWWPDQLKLNILRQHTTVSNPLDPDFDYAAAFNSLDYYALKKDLQDLMTDSQDWWPADFGHYGGLFIRMAWHSAGTYRTFDGRGGGGQGQQRFAPLNSWPDNVSLDKARRLLWPIKQKYGNKISWADLMILTGNVALESMGFKTFGFAGGRKDTWEADESVYWGGETTWLGNDVRYSHGFAGSSKHGAVIADEASHRDIHSRELEKPLAAAHMGLIYVNPEGPDGNPDPVAAARDIRTTFARMAMNDEETVALIAGGHTFGKTHGAASSDHVGSEPEAAGLEAQGLGWQNSHGSGKGAHTITSGLEVTWTKTPTQWNLNFLEYLFRFEWVLTKSPAGANQWVAKDADAFIPDAYDSSKKHRPQMLTTDLSLRFDPAYEKISRRFLENPDQFAEAFARAWFKLTHRDMGPRARYIGPEVPAEELSWQDPIPAVNHPVISETDIAALKRDILATGVDPSKFISTAWASASTFRGSDKRGGANGARIRLAPQRDWEVNNQPWLAAALKALEDIQDKFNSAQNDGKRVSLADLIVLAGCAAVEKAASDAGHIITVPFTPGRMDASQDQTDVESFNQMEPVADGFRNYGTSTARVPAEHYLVDKAQLLTLSAPEMTVLVGGLRALNANYDGSAHGVFTTRPGQLTNDFFVNLLDMNTSWKASGSGNDIYEGTDRRTGSKKWTATRADLVFGSHAELRAIAEVYGSSDGKGKFVKDFVAAWAKVMNLDRFDVN.

The segment at 1–24 is disordered; the sequence is MADKCPFHNQAPKPNVAGSGTQNR. Positions 95–241 form a cross-link, tryptophyl-tyrosyl-methioninium (Trp-Tyr) (with M-267); sequence WHSAGTYRTF…LAAAHMGLIY (147 aa). The active-site Proton acceptor is the His96. The segment at residues 241-267 is a cross-link (tryptophyl-tyrosyl-methioninium (Tyr-Met) (with W-95)); the sequence is YVNPEGPDGNPDPVAAARDIRTTFARM. His282 contributes to the heme b binding site.

Belongs to the peroxidase family. Peroxidase/catalase subfamily. Homodimer or homotetramer. It depends on heme b as a cofactor. Post-translationally, formation of the three residue Trp-Tyr-Met cross-link is important for the catalase, but not the peroxidase activity of the enzyme.

The protein resides in the cytoplasm. The enzyme catalyses H2O2 + AH2 = A + 2 H2O. It carries out the reaction 2 H2O2 = O2 + 2 H2O. Its function is as follows. Bifunctional enzyme with both catalase and broad-spectrum peroxidase activity. The sequence is that of Catalase-peroxidase from Aspergillus oryzae (strain ATCC 42149 / RIB 40) (Yellow koji mold).